Consider the following 1677-residue polypeptide: Zinc finger protein 831 (1677 aa).

The segment covering 1–26 has biased composition (pro residues); it reads MEVPEPTCPAPPARDQPAPTPGPPGA. The disordered stretch occupies residues 1-43; it reads MEVPEPTCPAPPARDQPAPTPGPPGAPGGQASPHLTLGPVLLP. 2 C2H2-type zinc fingers span residues 144–166 and 172–196; these read YLCPHCGRDCLKPSVLEKHIRSH and FPCATCGIAFKTQSNLYKHRRTQTH. Disordered stretches follow at residues 193–250, 270–398, 516–557, 663–931, 950–1062, 1100–1119, 1137–1176, 1216–1243, 1510–1597, and 1620–1677; these read TQTH…SPGA, GSAF…AGLE, WLEP…PSGH, EAAG…VLSA, TPLP…TCEA, NWELGEPPGNAPEDPSSGPL, LTRPQGVPPGWPELALSSHSGTSRSHSTRSPHSTQNPFPS, LRDEGPNGPPGSNGGWTWTSPGEGGPAQ, SAES…GQYG, and LITR…VIEI. Composition is skewed to basic and acidic residues over residues 216 to 232 and 325 to 341; these read EGDKAGEPPRPEGRGES and KPWDAKAPEGRLRKCES. Over residues 376–385 the composition is skewed to gly residues; sequence EGGPGPGPGV. Positions 391–423 form a coiled coil; it reads GAREAGLELEKKRLEERIAQLISHNQAVVDDAQ. Composition is skewed to basic and acidic residues over residues 517-526, 674-684, 707-727, and 813-834; these read LEPREPRDPW, QDRRTPVHEDI, PTKHGETVARRGDSDRPRVEE, and SGEDKLPSERKKLKVEDLHSWK. Composition is skewed to low complexity over residues 880–894 and 905–919; these read LESSGASLAAASVAL and PLHPAAPAPAEHPSL. A compositionally biased stretch (low complexity) spans 1153–1170; sequence SSHSGTSRSHSTRSPHST. The span at 1518–1531 shows a compositional bias: polar residues; sequence QTAGRTLTSSSPDS. Residues 1649 to 1662 are compositionally biased toward basic and acidic residues; sequence RSLEGMRKQTRVEF.

This chain is Zinc finger protein 831 (ZNF831), found in Homo sapiens (Human).